Reading from the N-terminus, the 275-residue chain is NADPH-dependent 7-cyano-7-deazaguanine reductase (275 aa).

81 to 83 provides a ligand contact to substrate; that stretch reads IES. 83-84 provides a ligand contact to NADPH; sequence SK. C181 acts as the Thioimide intermediate in catalysis. The active-site Proton donor is D188. 220–221 serves as a coordination point for substrate; it reads HE. 249-250 contributes to the NADPH binding site; that stretch reads RG.

This sequence belongs to the GTP cyclohydrolase I family. QueF type 2 subfamily. As to quaternary structure, homodimer.

Its subcellular location is the cytoplasm. It catalyses the reaction 7-aminomethyl-7-carbaguanine + 2 NADP(+) = 7-cyano-7-deazaguanine + 2 NADPH + 3 H(+). It functions in the pathway tRNA modification; tRNA-queuosine biosynthesis. In terms of biological role, catalyzes the NADPH-dependent reduction of 7-cyano-7-deazaguanine (preQ0) to 7-aminomethyl-7-deazaguanine (preQ1). In Xylella fastidiosa (strain 9a5c), this protein is NADPH-dependent 7-cyano-7-deazaguanine reductase.